The sequence spans 87 residues: Omega-theraphotoxin-Gr1a (87 aa).

The N-terminal stretch at 1-24 (MKAQIFVVVLGLAALSVLCYGSEA) is a signal peptide. A propeptide spanning residues 25–49 (DESALHEEIFQLLAASDEVPKPQER) is cleaved from the precursor. 3 disulfides stabilise this stretch: Cys-51/Cys-65, Cys-58/Cys-70, and Cys-64/Cys-79. Val-85 is subject to Valine amide.

As to expression, expressed by the venom gland.

The protein localises to the secreted. In terms of biological role, inhibits P/Q- (Cav2.1/CACNA1A) and N-type (Cav2.2/CACNA1B) voltage-gated calcium channel by modifying voltage-dependent gating. It selectively and reversibly blocks the calcium channels coupled to glutamate release. Also inhibits potassium channels (Kv2.1/KCNB1) with lower affinity. Has also been shown to weakly inhibit Kv11.1/KCNH2/ERG1, Kv1.2/KCNA2, Kv1.3/KCNA3, Nav1.5/SCN5A, Nav1.7/SCN9A and TRPV1. In Grammostola rosea (Chilean rose tarantula), this protein is Omega-theraphotoxin-Gr1a.